The sequence spans 328 residues: Phospholipid scramblase 1 (328 aa).

The interval 1–93 (MENHSKQTEA…NHPGGPGGTP (93 aa)) is proline-rich domain (PRD). The segment at 1 to 96 (MENHSKQTEA…GGPGGTPWMP (96 aa)) is disordered. Topologically, residues 1-297 (MENHSKQTEA…IQFPLDLDVK (297 aa)) are cytoplasmic. The SH3-binding 1 signature appears at 18–26 (PAGYPPPYP). The short motif at 22–25 (PPPY) is the PPxY motif element. Over residues 28-47 (AAFQGPSDHAAYPIPQAGYQ) the composition is skewed to low complexity. The span at 49–64 (PPGPYPGPQPGYPVPP) shows a compositional bias: pro residues. An SH3-binding 2 motif is present at residues 56–64 (PQPGYPVPP). Tyr83 is subject to Phosphotyrosine; by ABL. The SH3-binding 3 motif lies at 93–101 (PWMPAPPPP). Thr170 carries the phosphothreonine; by PKC/PRKCD modification. S-palmitoyl cysteine attachment occurs at residues Cys193, Cys194, Cys197, and Cys198. The Nuclear localization signal motif lies at 269-275 (SKQWSGF). The chain crosses the membrane as a helical span at residues 298 to 314 (MKAVMLGACFLIDFMFF). The Extracellular portion of the chain corresponds to 315–328 (ERTGNEEQRSGAWQ).

Belongs to the phospholipid scramblase family. As to quaternary structure, forms homooligomers in the presence of calcium. Interacts with ABL. Interacts with RELT, RELL1 and RELL2. Interacts with OXSR1 in the presence of RELT. Interacts with OCLN, TOP2A and TOP2B. Interacts with TRPC1, TRPC4 and TRPC5. Interacts with ILDR1. Ca(2+) serves as cofactor. Mg(2+) is required as a cofactor. Requires Zn(2+) as cofactor. In terms of processing, phosphorylation at Thr-170 by PKC/PKCD increases its phospholipid scramblase activity during both cell stimulation and apoptosis. Phosphorylated by OXSR1 in the presence of RELT. Post-translationally, palmitoylation is required for its phospholipid scramblase activity. Palmitoylation regulates its localization to the cell membrane or the nucleus; trafficking to the cell membrane is dependent upon palmitoylation whereas in the absence of palmitoylation, localizes to the nucleus. In terms of tissue distribution, highly expressed in kidney, lung, liver and bone marrow, slightly in spleen, heart and macrophage.

It is found in the cell membrane. The protein resides in the nucleus. It localises to the cytoplasm. Its subcellular location is the perinuclear region. The enzyme catalyses a 1,2-diacyl-sn-glycero-3-phosphocholine(in) = a 1,2-diacyl-sn-glycero-3-phosphocholine(out). It carries out the reaction a 1,2-diacyl-sn-glycero-3-phosphoethanolamine(in) = a 1,2-diacyl-sn-glycero-3-phosphoethanolamine(out). It catalyses the reaction a 1,2-diacyl-sn-glycero-3-phospho-L-serine(in) = a 1,2-diacyl-sn-glycero-3-phospho-L-serine(out). In terms of biological role, catalyzes calcium-induced ATP-independent rapid bidirectional and non-specific distribution of phospholipids (lipid scrambling or lipid flip-flop) between the inner and outer leaflet of the plasma membrane resulting in collapse of the phospholipid asymmetry which leads to phosphatidylserine externalization on the cell surface. Mediates calcium-dependent phosphatidylserine externalization and apoptosis in neurons via its association with TRPC5. Also exhibits magnesium-dependent nuclease activity against double-stranded DNA and RNA but not single-stranded DNA and can enhance DNA decatenation mediated by TOP2A. Negatively regulates FcR-mediated phagocytosis in differentiated macrophages. May contribute to cytokine-regulated cell proliferation and differentiation. In Mus musculus (Mouse), this protein is Phospholipid scramblase 1 (Plscr1).